The primary structure comprises 194 residues: CMRF35-like molecule 5 (194 aa).

Residues 1–18 form the signal peptide; it reads MWLSPSLLLLILPGYSIA. The region spanning 19–125 is the Ig-like V-type domain; the sequence is AKITGPTTVN…LGVKVQVTIN (107 aa). The Extracellular portion of the chain corresponds to 19–165; the sequence is AKITGPTTVN…LTRSPLKSTH (147 aa). N-linked (GlcNAc...) asparagine glycosylation occurs at Asn-28. The cysteines at positions 39 and 107 are disulfide-linked. A helical transmembrane segment spans residues 166 to 186; it reads FLFLFLLELPLLLSMLGTVLW. The Cytoplasmic segment spans residues 187-194; that stretch reads VNRPQRRS.

It belongs to the CD300 family. Forms complexes with the CD300 family members with exception of CD300c. Post-translationally, N-glycosylated. As to expression, expression seems restricted to cells of myeloid lineage.

It localises to the cell membrane. The chain is CMRF35-like molecule 5 (CD300LD) from Homo sapiens (Human).